A 389-amino-acid polypeptide reads, in one-letter code: NAD-dependent protein deacetylase sirtuin-2 (389 aa).

Residues 1–34 (MAEPDPSHPLETQAGKVQEAQDSDSDSEGGAAGG) are disordered. Residue Ala-2 is modified to N-acetylalanine. Residues Ser-23, Ser-25, and Ser-27 each carry the phosphoserine modification. Positions 41-51 (LRNLFSQTLSL) match the Nuclear export signal motif. At Ser-53 the chain carries Phosphoserine. One can recognise a Deacetylase sirtuin-type domain in the interval 57–338 (RLLDELTLEG…LALAELLGWK (282 aa)). NAD(+) is bound by residues 85 to 89 (AGIST) and 95 to 97 (DFR). Ser-100 is modified (phosphoserine). An NAD(+)-binding site is contributed by 167–170 (QNID). His-187 (proton acceptor) is an active-site residue. Zn(2+) is bound by residues Cys-195 and Cys-200. Residue Ser-207 is modified to Phosphoserine. Positions 221 and 224 each coordinate Zn(2+). NAD(+)-binding positions include 262 to 263 (TS), 286 to 288 (NKE), and Cys-324. The disordered stretch occupies residues 351 to 389 (SIDAQSGAGVPNPSTSASPKKSPPPAKDEARTTEREKPQ). Positions 361-370 (PNPSTSASPK) are enriched in low complexity. Ser-368 carries the post-translational modification Phosphoserine; by CDK2 and CDK5. Ser-372 is subject to Phosphoserine. The segment covering 376-389 (AKDEARTTEREKPQ) has biased composition (basic and acidic residues).

Belongs to the sirtuin family. Class I subfamily. Interacts with CDC20, FOXO3 and FZR1. Associates with microtubules in primary cortical mature neurons. Homotrimer. Isoform 1 and isoform 2 interact (via both phosphorylated, unphosphorylated, active or inactive forms) with HDAC6; the interaction is necessary for the complex to interact with alpha-tubulin, suggesting that these proteins belong to a large complex that deacetylates the cytoskeleton. Interacts with FOXO1; the interaction is disrupted upon serum-starvation or oxidative stress, leading to increased level of acetylated FOXO1 and induction of autophagy. Interacts with RELA; the interaction occurs in the cytoplasm and is increased in a TNF-alpha-dependent manner. Interacts with HOXA10; the interaction is direct. Interacts with YWHAB and YWHAG; the interactions occur in a AKT-dependent manner and increase SIRT2-dependent TP53 deacetylation. Interacts with MAPK1/ERK2 and MAPK3/ERK1; the interactions increase SIRT2 stability and deacetylation activity. Interacts (phosphorylated form) with KMT5A isoform 2; the interaction is direct, stimulates KMT5A-mediated methyltransferase activity on histone at 'Lys-20' (H4K20me1) and is increased in a H(2)O(2)-induced oxidative stress-dependent manner. Interacts with G6PD; the interaction is enhanced by H(2)O(2) treatment. Interacts with a G1/S-specific cyclin E-CDK2 complex. Interacts with AURKA, CDK5R1 (p35 form) and CDK5 and HIF1A. Isoform 1, isoform 2 and isoform 5 interact (via C-terminus region) with EP300. Interacts with the tRNA ligase SARS1; recruited to the VEGFA promoter via interaction with SARS1. Interacts with BEX4; negatively regulates alpha-tubulin deacetylation by SIRT2. Zn(2+) is required as a cofactor. Post-translationally, phosphorylated at phosphoserine and phosphothreonine. Phosphorylated at Ser-368 by a mitotic kinase CDK1/cyclin B at the G2/M transition; phosphorylation regulates the delay in cell-cycle progression. Phosphorylated at Ser-368 by a mitotic kinase G1/S-specific cyclin E/Cdk2 complex; phosphorylation inactivates SIRT2-mediated alpha-tubulin deacetylation and thereby negatively regulates cell adhesion, cell migration and neurite outgrowth during neuronal differentiation. Phosphorylated by cyclin A/Cdk2 and p35-Cdk5 complexes and to a lesser extent by the cyclin D3/Cdk4 and cyclin B/Cdk1, in vitro. Dephosphorylated at Ser-368 by CDC14A and CDC14B around early anaphase. Acetylated by EP300; acetylation leads both to the decreased of SIRT2-mediated alpha-tubulin deacetylase activity and SIRT2-mediated down-regulation of TP53 transcriptional activity. In terms of processing, ubiquitinated. Isoform 1 is expressed in heart, liver and skeletal muscle, weakly expressed in the cortex. Isoform 2 is strongly expressed in the cortex, weakly expressed in heart and liver. Weakly expressed in several malignancies including breast, liver, brain, kidney and prostate cancers compared to normal tissues. Weakly expressed in glioma cell lines compared to normal brain tissues (at protein level). Widely expressed. Highly expressed in heart, brain and skeletal muscle, while it is weakly expressed in placenta and lung. Down-regulated in many gliomas suggesting that it may act as a tumor suppressor gene in human gliomas possibly through the regulation of microtubule network.

It is found in the nucleus. The protein resides in the cytoplasm. Its subcellular location is the perinuclear region. It localises to the cytoskeleton. The protein localises to the microtubule organizing center. It is found in the centrosome. The protein resides in the centriole. Its subcellular location is the spindle. It localises to the midbody. The protein localises to the chromosome. It is found in the perikaryon. The protein resides in the cell projection. Its subcellular location is the growth cone. It localises to the myelin membrane. It catalyses the reaction N(6)-acetyl-L-lysyl-[protein] + NAD(+) + H2O = 2''-O-acetyl-ADP-D-ribose + nicotinamide + L-lysyl-[protein]. The enzyme catalyses N(6)-tetradecanoyl-L-lysyl-[protein] + NAD(+) + H2O = 2''-O-tetradecanoyl-ADP-D-ribose + nicotinamide + L-lysyl-[protein]. It carries out the reaction N(6)-hexadecanoyl-L-lysyl-[protein] + NAD(+) + H2O = 2''-O-hexadecanoyl-ADP-D-ribose + nicotinamide + L-lysyl-[protein]. With respect to regulation, inhibited by Sirtinol, A3 and M15 small molecules. Inhibited by nicotinamide. Inhibited by a macrocyclic peptide inhibitor S2iL5. Inhibited by EP300-induced acetylation. In terms of biological role, NAD-dependent protein deacetylase, which deacetylates internal lysines on histone and alpha-tubulin as well as many other proteins such as key transcription factors. Participates in the modulation of multiple and diverse biological processes such as cell cycle control, genomic integrity, microtubule dynamics, cell differentiation, metabolic networks, and autophagy. Plays a major role in the control of cell cycle progression and genomic stability. Functions in the antephase checkpoint preventing precocious mitotic entry in response to microtubule stress agents, and hence allowing proper inheritance of chromosomes. Positively regulates the anaphase promoting complex/cyclosome (APC/C) ubiquitin ligase complex activity by deacetylating CDC20 and FZR1, then allowing progression through mitosis. Associates both with chromatin at transcriptional start sites (TSSs) and enhancers of active genes. Plays a role in cell cycle and chromatin compaction through epigenetic modulation of the regulation of histone H4 'Lys-20' methylation (H4K20me1) during early mitosis. Specifically deacetylates histone H4 at 'Lys-16' (H4K16ac) between the G2/M transition and metaphase enabling H4K20me1 deposition by KMT5A leading to ulterior levels of H4K20me2 and H4K20me3 deposition throughout cell cycle, and mitotic S-phase progression. Deacetylates KMT5A modulating KMT5A chromatin localization during the mitotic stress response. Also deacetylates histone H3 at 'Lys-57' (H3K56ac) during the mitotic G2/M transition. Upon bacterium Listeria monocytogenes infection, deacetylates 'Lys-18' of histone H3 in a receptor tyrosine kinase MET- and PI3K/Akt-dependent manner, thereby inhibiting transcriptional activity and promoting late stages of listeria infection. During oocyte meiosis progression, may deacetylate histone H4 at 'Lys-16' (H4K16ac) and alpha-tubulin, regulating spindle assembly and chromosome alignment by influencing microtubule dynamics and kinetochore function. Deacetylates histone H4 at 'Lys-16' (H4K16ac) at the VEGFA promoter and thereby contributes to regulate expression of VEGFA, a key regulator of angiogenesis. Deacetylates alpha-tubulin at 'Lys-40' and hence controls neuronal motility, oligodendroglial cell arbor projection processes and proliferation of non-neuronal cells. Phosphorylation at Ser-368 by a G1/S-specific cyclin E-CDK2 complex inactivates SIRT2-mediated alpha-tubulin deacetylation, negatively regulating cell adhesion, cell migration and neurite outgrowth during neuronal differentiation. Deacetylates PARD3 and participates in the regulation of Schwann cell peripheral myelination formation during early postnatal development and during postinjury remyelination. Involved in several cellular metabolic pathways. Plays a role in the regulation of blood glucose homeostasis by deacetylating and stabilizing phosphoenolpyruvate carboxykinase PCK1 activity in response to low nutrient availability. Acts as a key regulator in the pentose phosphate pathway (PPP) by deacetylating and activating the glucose-6-phosphate G6PD enzyme, and therefore, stimulates the production of cytosolic NADPH to counteract oxidative damage. Maintains energy homeostasis in response to nutrient deprivation as well as energy expenditure by inhibiting adipogenesis and promoting lipolysis. Attenuates adipocyte differentiation by deacetylating and promoting FOXO1 interaction to PPARG and subsequent repression of PPARG-dependent transcriptional activity. Plays a role in the regulation of lysosome-mediated degradation of protein aggregates by autophagy in neuronal cells. Deacetylates FOXO1 in response to oxidative stress or serum deprivation, thereby negatively regulating FOXO1-mediated autophagy. Deacetylates a broad range of transcription factors and co-regulators regulating target gene expression. Deacetylates transcriptional factor FOXO3 stimulating the ubiquitin ligase SCF(SKP2)-mediated FOXO3 ubiquitination and degradation. Deacetylates HIF1A and therefore promotes HIF1A degradation and inhibition of HIF1A transcriptional activity in tumor cells in response to hypoxia. Deacetylates RELA in the cytoplasm inhibiting NF-kappaB-dependent transcription activation upon TNF-alpha stimulation. Inhibits transcriptional activation by deacetylating p53/TP53 and EP300. Also deacetylates EIF5A. Functions as a negative regulator on oxidative stress-tolerance in response to anoxia-reoxygenation conditions. Plays a role as tumor suppressor. In addition to protein deacetylase activity, also has activity toward long-chain fatty acyl groups and mediates protein-lysine demyristoylation and depalmitoylation of target proteins, such as ARF6 and KRAS, thereby regulating their association with membranes. Its function is as follows. Deacetylates EP300, alpha-tubulin and histone H3 and H4. Functionally, lacks deacetylation activity, at least toward known SIRT2 targets. In Homo sapiens (Human), this protein is NAD-dependent protein deacetylase sirtuin-2 (SIRT2).